A 528-amino-acid polypeptide reads, in one-letter code: 3-ketoacyl-CoA synthase 2 (528 aa).

2 consecutive transmembrane segments (helical) span residues 36-56 (LGYH…VGLL) and 78-98 (FHFL…TLYF). The region spanning 97–388 (YFTTRPRRIF…FFATLVARKV (292 aa)) is the FAE domain. Catalysis depends on residues Cys-241, His-320, His-407, His-411, and Asn-444.

This sequence belongs to the thiolase-like superfamily. Chalcone/stilbene synthases family. As to expression, expressed in siliques, flowers and stems. In young seedlings, expressed in the central cylinder of primary roots, in emerging lateral roots and in their root cap, but not in aboveground tissues such as hypocotyls, cotyledons and leaves. Expressed in sepals in mature flowers and in the chalaza and micropyle region of developing seeds shortly prior to or just after the detachment from the funiculus. Expressed in roots, flowers, cauline leaves and siliques.

The protein localises to the membrane. The catalysed reaction is a very-long-chain acyl-CoA + malonyl-CoA + H(+) = a very-long-chain 3-oxoacyl-CoA + CO2 + CoA. Its pathway is lipid metabolism; fatty acid biosynthesis. Its activity is regulated as follows. Inhibited by K3 herbicides such as allidochlor, anilofos, cafenstrole and flufenacet. Strongly inhibited by metazachlor. Its function is as follows. Mediates the synthesis of VLCFAs from 22 to 26 carbons in length (e.g. C22, C24, C26). Involved in the elongation of C20 fatty acid suberin precursors. Functionally redundant with KCS20 in the two-carbon elongation of C22 fatty acids that is required for cuticular wax and root suberin biosynthesis. In Arabidopsis thaliana (Mouse-ear cress), this protein is 3-ketoacyl-CoA synthase 2.